We begin with the raw amino-acid sequence, 227 residues long: DNA repair protein RecO (227 aa).

Belongs to the RecO family.

Functionally, involved in DNA repair and RecF pathway recombination. The polypeptide is DNA repair protein RecO (Pseudomonas syringae pv. syringae (strain B728a)).